A 439-amino-acid chain; its full sequence is MKMHFCIPVSQQRPDALGGRYVLYSVYLDGFLFCKVRYSQLHRWDEQLRRVFGNCLPPFPPKYYLAMTTAMAEERRDQLERYLQNVTADPRVTRSDVFTEFLTLVQLHTLNITIQNVELAVFLPDGRSIKVEGLTSDTAERVLEVMAHKLGLQPDLVGYFGLFLIQCFPEGKLSVVKKLADFELPYTSLQSSEMENCKIGLRKWYLDPALDSMLMDCRAAGDLLYMQAVQDIEKEWMKPTQAQREELKALQKKENQTKFLELSQEVRHYGYVQLDPCTCNHPEPGCGAQLSIGNNEISCCITLPNGQIQDIAFQMSRVKCWQVTFLGTLLDTDGPQRTLNQNLELRFQYSEDSCQQWFVIYTKQAFFLSSCLKKMISERMTKLTEQSPEMQIEVPEQGRSKKHPSQPSQQKVYFNFLRKGKMKRSEGDYVWDTLMEEGL.

The PX domain occupies methionine 1 to threonine 109. Residues threonine 384–glutamine 409 are disordered.

The protein belongs to the sorting nexin family. In terms of assembly, interacts with CCDC22, CCDC93, VPS26C and VPS35L, associates with the retriever and CCC complexes.

Its function is as follows. May be involved in protein trafficking. This is Sorting nexin-31 (Snx31) from Mus musculus (Mouse).